A 248-amino-acid polypeptide reads, in one-letter code: Ubiquinone/menaquinone biosynthesis C-methyltransferase UbiE (248 aa).

Positions 68 and 92 each coordinate S-adenosyl-L-methionine.

The protein belongs to the class I-like SAM-binding methyltransferase superfamily. MenG/UbiE family.

It carries out the reaction a 2-demethylmenaquinol + S-adenosyl-L-methionine = a menaquinol + S-adenosyl-L-homocysteine + H(+). The enzyme catalyses a 2-methoxy-6-(all-trans-polyprenyl)benzene-1,4-diol + S-adenosyl-L-methionine = a 5-methoxy-2-methyl-3-(all-trans-polyprenyl)benzene-1,4-diol + S-adenosyl-L-homocysteine + H(+). The protein operates within quinol/quinone metabolism; menaquinone biosynthesis; menaquinol from 1,4-dihydroxy-2-naphthoate: step 2/2. It functions in the pathway cofactor biosynthesis; ubiquinone biosynthesis. In terms of biological role, methyltransferase required for the conversion of demethylmenaquinol (DMKH2) to menaquinol (MKH2) and the conversion of 2-polyprenyl-6-methoxy-1,4-benzoquinol (DDMQH2) to 2-polyprenyl-3-methyl-6-methoxy-1,4-benzoquinol (DMQH2). The protein is Ubiquinone/menaquinone biosynthesis C-methyltransferase UbiE of Rickettsia peacockii (strain Rustic).